The sequence spans 190 residues: Inner membrane-spanning protein YciB (190 aa).

5 consecutive transmembrane segments (helical) span residues Ile-22–Ala-42, Met-50–Asp-70, Trp-76–Gly-96, Ile-118–Phe-138, and Phe-148–Ile-168.

Belongs to the YciB family.

It localises to the cell inner membrane. Its function is as follows. Plays a role in cell envelope biogenesis, maintenance of cell envelope integrity and membrane homeostasis. The sequence is that of Inner membrane-spanning protein YciB from Vibrio campbellii (strain ATCC BAA-1116).